A 396-amino-acid chain; its full sequence is NADH-quinone oxidoreductase subunit D (396 aa).

Belongs to the complex I 49 kDa subunit family. NDH-1 is composed of 14 different subunits. Subunits NuoB, C, D, E, F, and G constitute the peripheral sector of the complex.

It localises to the cell inner membrane. The enzyme catalyses a quinone + NADH + 5 H(+)(in) = a quinol + NAD(+) + 4 H(+)(out). Its function is as follows. NDH-1 shuttles electrons from NADH, via FMN and iron-sulfur (Fe-S) centers, to quinones in the respiratory chain. The immediate electron acceptor for the enzyme in this species is believed to be ubiquinone. Couples the redox reaction to proton translocation (for every two electrons transferred, four hydrogen ions are translocated across the cytoplasmic membrane), and thus conserves the redox energy in a proton gradient. This chain is NADH-quinone oxidoreductase subunit D, found in Rhizobium johnstonii (strain DSM 114642 / LMG 32736 / 3841) (Rhizobium leguminosarum bv. viciae).